The chain runs to 295 residues: Ribosomal RNA small subunit methyltransferase A (295 aa).

The S-adenosyl-L-methionine site is built by Asn31, Leu33, Gly58, Glu79, Asp104, and Asn129.

It belongs to the class I-like SAM-binding methyltransferase superfamily. rRNA adenine N(6)-methyltransferase family. RsmA subfamily.

The protein localises to the cytoplasm. The catalysed reaction is adenosine(1518)/adenosine(1519) in 16S rRNA + 4 S-adenosyl-L-methionine = N(6)-dimethyladenosine(1518)/N(6)-dimethyladenosine(1519) in 16S rRNA + 4 S-adenosyl-L-homocysteine + 4 H(+). In terms of biological role, specifically dimethylates two adjacent adenosines (A1518 and A1519) in the loop of a conserved hairpin near the 3'-end of 16S rRNA in the 30S particle. May play a critical role in biogenesis of 30S subunits. This Enterococcus faecalis (strain ATCC 700802 / V583) protein is Ribosomal RNA small subunit methyltransferase A.